The sequence spans 1396 residues: Major capsid protein (1396 aa).

It belongs to the herpesviridae major capsid protein family. In terms of assembly, homomultimer. Makes the hexons and eleven out of twelve pentons. Interacts with triplex proteins 1/TRX1 and 2/TRX2; adjacent capsomers are linked together in groups of three by triplexes, heterotrimeric complexes composed of one molecule of TRX1 and two molecules of TRX2. Interacts with scaffold protein; this interaction allows efficient MCP transport to the host nucleus. Interacts with capsid vertex component 2/CVC2. Interacts with the small capsomere-interacting protein/SCP.

It is found in the virion. It localises to the host nucleus. Functionally, self-assembles to form an icosahedral capsid with a T=16 symmetry, about 200 nm in diameter, and consisting of 150 hexons and 12 pentons (total of 162 capsomers). Hexons form the edges and faces of the capsid and are each composed of six MCP molecules. In contrast, one penton is found at each of the 12 vertices. Eleven of the pentons are MCP pentamers, while the last vertex is occupied by the portal complex. The capsid is surrounded by a layer of proteinaceous material designated the tegument which, in turn, is enclosed in an envelope of host cell-derived lipids containing virus-encoded glycoproteins. In Varicella-zoster virus (strain Dumas) (HHV-3), this protein is Major capsid protein.